Consider the following 241-residue polypeptide: Probable transcriptional regulatory protein CV_3123 (241 aa).

It belongs to the TACO1 family.

The protein resides in the cytoplasm. In Chromobacterium violaceum (strain ATCC 12472 / DSM 30191 / JCM 1249 / CCUG 213 / NBRC 12614 / NCIMB 9131 / NCTC 9757 / MK), this protein is Probable transcriptional regulatory protein CV_3123.